Reading from the N-terminus, the 663-residue chain is DNA ligase (663 aa).

Residues 33 to 37 (DYSYD), 82 to 83 (SI), and glutamate 112 each bind NAD(+). The N6-AMP-lysine intermediate role is filled by lysine 114. NAD(+) contacts are provided by arginine 135, glutamate 171, lysine 285, and lysine 309. Residues cysteine 403, cysteine 406, cysteine 419, and cysteine 424 each coordinate Zn(2+). The region spanning 581–663 (DKEAPLQGKV…LRILDAKSVS (83 aa)) is the BRCT domain.

The protein belongs to the NAD-dependent DNA ligase family. LigA subfamily. The cofactor is Mg(2+). Mn(2+) is required as a cofactor.

The enzyme catalyses NAD(+) + (deoxyribonucleotide)n-3'-hydroxyl + 5'-phospho-(deoxyribonucleotide)m = (deoxyribonucleotide)n+m + AMP + beta-nicotinamide D-nucleotide.. Functionally, DNA ligase that catalyzes the formation of phosphodiester linkages between 5'-phosphoryl and 3'-hydroxyl groups in double-stranded DNA using NAD as a coenzyme and as the energy source for the reaction. It is essential for DNA replication and repair of damaged DNA. The sequence is that of DNA ligase from Chlamydia trachomatis serovar A (strain ATCC VR-571B / DSM 19440 / HAR-13).